The chain runs to 197 residues: Ribosomal RNA large subunit methyltransferase E (197 aa).

S-adenosyl-L-methionine-binding residues include Gly-52, Trp-54, Asp-72, Asp-88, and Asp-112. Residue Lys-152 is the Proton acceptor of the active site.

This sequence belongs to the class I-like SAM-binding methyltransferase superfamily. RNA methyltransferase RlmE family.

Its subcellular location is the cytoplasm. It carries out the reaction uridine(2552) in 23S rRNA + S-adenosyl-L-methionine = 2'-O-methyluridine(2552) in 23S rRNA + S-adenosyl-L-homocysteine + H(+). Functionally, specifically methylates the uridine in position 2552 of 23S rRNA at the 2'-O position of the ribose in the fully assembled 50S ribosomal subunit. The polypeptide is Ribosomal RNA large subunit methyltransferase E (Nitrosopumilus maritimus (strain SCM1)).